We begin with the raw amino-acid sequence, 273 residues long: 6-carboxyhexanoate--CoA ligase (273 aa).

It belongs to the BioW family. Homodimer. It depends on Mg(2+) as a cofactor.

The catalysed reaction is heptanedioate + ATP + CoA = 6-carboxyhexanoyl-CoA + AMP + diphosphate. The protein operates within metabolic intermediate metabolism; pimeloyl-CoA biosynthesis; pimeloyl-CoA from pimelate: step 1/1. Functionally, catalyzes the transformation of pimelate into pimeloyl-CoA with concomitant hydrolysis of ATP to AMP. The protein is 6-carboxyhexanoate--CoA ligase of Alkalihalophilus pseudofirmus (strain ATCC BAA-2126 / JCM 17055 / OF4) (Bacillus pseudofirmus).